The following is a 512-amino-acid chain: Lysine--tRNA ligase (512 aa).

Mg(2+) contacts are provided by glutamate 408 and glutamate 415.

It belongs to the class-II aminoacyl-tRNA synthetase family. In terms of assembly, homodimer. The cofactor is Mg(2+).

Its subcellular location is the cytoplasm. It carries out the reaction tRNA(Lys) + L-lysine + ATP = L-lysyl-tRNA(Lys) + AMP + diphosphate. The chain is Lysine--tRNA ligase from Prochlorococcus marinus (strain MIT 9312).